Consider the following 192-residue polypeptide: MKALIDAGVVKFGRFVLSSGIESPFYVDLRRALGHPDLVKWVVSGYLSALSRLKFDVLLGVATGGIPYASILGYLLQKPFGYVRAGAKGYGTMQAVEGADVAGLAAVVVDDVLTTGNSLINAIKAVREAGGEVVGALVFLDREQCGSQNVRRETGVEVFSVYKMRELLETLKPYIGEGHYRAAVEYLAKWSC.

5-phospho-alpha-D-ribose 1-diphosphate contacts are provided by residues Arg-84, Lys-88, and 110–118 (DDVLTTGNS). Thr-114 and Arg-142 together coordinate orotate.

This sequence belongs to the purine/pyrimidine phosphoribosyltransferase family. PyrE subfamily. As to quaternary structure, homodimer. The cofactor is Mg(2+).

It carries out the reaction orotidine 5'-phosphate + diphosphate = orotate + 5-phospho-alpha-D-ribose 1-diphosphate. The protein operates within pyrimidine metabolism; UMP biosynthesis via de novo pathway; UMP from orotate: step 1/2. Catalyzes the transfer of a ribosyl phosphate group from 5-phosphoribose 1-diphosphate to orotate, leading to the formation of orotidine monophosphate (OMP). The polypeptide is Orotate phosphoribosyltransferase (Pyrobaculum calidifontis (strain DSM 21063 / JCM 11548 / VA1)).